The sequence spans 374 residues: tRNA-specific 2-thiouridylase MnmA (374 aa).

ATP-binding positions include 13-20 and M39; that span reads GMSGGVDS. Residues 99-101 are interaction with target base in tRNA; it reads NPD. C104 functions as the Nucleophile in the catalytic mechanism. A disulfide bridge connects residues C104 and C201. G128 contacts ATP. The interaction with tRNA stretch occupies residues 151-153; it reads KDQ. The active-site Cysteine persulfide intermediate is the C201. The segment at 313-314 is interaction with tRNA; the sequence is RY.

Belongs to the MnmA/TRMU family.

It is found in the cytoplasm. The enzyme catalyses S-sulfanyl-L-cysteinyl-[protein] + uridine(34) in tRNA + AH2 + ATP = 2-thiouridine(34) in tRNA + L-cysteinyl-[protein] + A + AMP + diphosphate + H(+). Its function is as follows. Catalyzes the 2-thiolation of uridine at the wobble position (U34) of tRNA, leading to the formation of s(2)U34. The sequence is that of tRNA-specific 2-thiouridylase MnmA from Streptococcus equi subsp. equi (strain 4047).